Consider the following 434-residue polypeptide: Glutamyl-tRNA reductase (434 aa).

Substrate is bound by residues 49–52 (TCNR), S109, 114–116 (EPQ), and Q120. C50 acts as the Nucleophile in catalysis. Position 189-194 (189-194 (GAGEMA)) interacts with NADP(+).

Belongs to the glutamyl-tRNA reductase family. As to quaternary structure, homodimer.

The enzyme catalyses (S)-4-amino-5-oxopentanoate + tRNA(Glu) + NADP(+) = L-glutamyl-tRNA(Glu) + NADPH + H(+). It functions in the pathway porphyrin-containing compound metabolism; protoporphyrin-IX biosynthesis; 5-aminolevulinate from L-glutamyl-tRNA(Glu): step 1/2. Catalyzes the NADPH-dependent reduction of glutamyl-tRNA(Glu) to glutamate 1-semialdehyde (GSA). The polypeptide is Glutamyl-tRNA reductase (Desulfatibacillum aliphaticivorans).